Consider the following 375-residue polypeptide: Pectate lyase 1 (375 aa).

The signal sequence occupies residues methionine 1–serine 21. Cysteines 28 and 45 form a disulfide. A glycan (N-linked (GlcNAc...) asparagine) is linked at asparagine 110. A disulfide bond links cysteine 128 and cysteine 147. A glycan (N-linked (GlcNAc...) asparagine) is linked at asparagine 148. Aspartate 170 is a Ca(2+) binding site. A glycan (N-linked (GlcNAc...) asparagine) is linked at asparagine 178. Aspartate 194 and aspartate 198 together coordinate Ca(2+). Arginine 250 is an active-site residue. N-linked (GlcNAc...) asparagine glycosylation is present at asparagine 293. Cysteine 306 and cysteine 312 form a disulfide bridge. N-linked (GlcNAc...) asparagine glycosylation occurs at asparagine 352.

Belongs to the polysaccharide lyase 1 family. Amb a subfamily. The cofactor is Ca(2+).

It carries out the reaction Eliminative cleavage of (1-&gt;4)-alpha-D-galacturonan to give oligosaccharides with 4-deoxy-alpha-D-galact-4-enuronosyl groups at their non-reducing ends.. It participates in glycan metabolism; pectin degradation; 2-dehydro-3-deoxy-D-gluconate from pectin: step 2/5. Has pectate lyase activity. This is Pectate lyase 1 from Chamaecyparis obtusa (Hinoki false-cypress).